The primary structure comprises 235 residues: Claudin-16 (235 aa).

Residues 1-3 lie on the Cytoplasmic side of the membrane; it reads MKD. The helical transmembrane segment at 4–24 threads the bilayer; sequence LLQYAACFLAIFSTGFLIVAT. Residues 25-79 lie on the Extracellular side of the membrane; the sequence is RTDCWMVNADDSLEVSTKCRGLWWECVTNAFDGIRTCDEYDSIYAEHPLKLVVTR. A helical membrane pass occupies residues 80-100; that stretch reads ALMITADILAGFGFITLLLGL. The Cytoplasmic segment spans residues 101–115; sequence DCVKFLPDEPHIKVR. The helical transmembrane segment at 116–136 threads the bilayer; sequence LCFVAGTVLLIAGTPGIIGSV. The Extracellular portion of the chain corresponds to 137–169; it reads WYAVDVYVERSSLVLHNIFLGIQYKFGWSCWLG. Residues 170 to 190 traverse the membrane as a helical segment; the sequence is MAGSLGCFLAGALLTCCLYLF. Residues 191–235 lie on the Cytoplasmic side of the membrane; the sequence is KDVGPERNYPYAMRKPYSTAGVSMAKSYKAPRTETAKMYAVDTRV. Residues 233-235 carry the Interaction with TJP1 motif; sequence TRV.

The protein belongs to the claudin family. In terms of assembly, can form heteropolymeric tight junction strands with other claudins. Interacts with CLDN19. Interacts (via PDZ-binding motif TRV) with TJP1 (via PDZ domain). Cannot form tight junction strands on its own.

The protein localises to the cell junction. It is found in the tight junction. It localises to the cell membrane. The enzyme catalyses Mg(2+)(in) = Mg(2+)(out). It carries out the reaction Ca(2+)(in) = Ca(2+)(out). It catalyses the reaction Na(+)(in) = Na(+)(out). The catalysed reaction is K(+)(in) = K(+)(out). The enzyme catalyses Rb(+)(in) = Rb(+)(out). It carries out the reaction Cs(+)(in) = Cs(+)(out). It catalyses the reaction Li(+)(in) = Li(+)(out). Forms paracellular channels: coassembles with CLDN19 into tight junction strands with cation-selective channels through the strands, conveying epithelial permeability in a process known as paracellular tight junction permeability. Involved in the maintenance of ion gradients along the nephron. In the thick ascending limb (TAL) of Henle's loop, facilitates sodium paracellular permeability from the interstitial compartment to the lumen, contributing to the lumen-positive transepithelial potential that drives paracellular magnesium and calcium reabsorption. The protein is Claudin-16 of Rattus norvegicus (Rat).